The chain runs to 242 residues: ATP synthase subunit a (242 aa).

Helical transmembrane passes span 21 to 41 (LSSI…AIIC), 83 to 103 (AVTL…FSIV), 117 to 137 (DATV…FYGI), 175 to 195 (LYGN…LFFN), and 198 to 218 (AWGW…SIFV).

The protein belongs to the ATPase A chain family. In terms of assembly, F-type ATPases have 2 components, CF(1) - the catalytic core - and CF(0) - the membrane proton channel. CF(1) has five subunits: alpha(3), beta(3), gamma(1), delta(1), epsilon(1). CF(0) has three main subunits: a(1), b(2) and c(9-12). The alpha and beta chains form an alternating ring which encloses part of the gamma chain. CF(1) is attached to CF(0) by a central stalk formed by the gamma and epsilon chains, while a peripheral stalk is formed by the delta and b chains.

Its subcellular location is the cell membrane. In terms of biological role, key component of the proton channel; it plays a direct role in the translocation of protons across the membrane. The sequence is that of ATP synthase subunit a from Staphylococcus aureus (strain Newman).